The chain runs to 463 residues: Cytoplasmic 60S subunit biogenesis factor SPCC550.15c (463 aa).

2 consecutive C2H2-type zinc fingers follow at residues 5–30 (FACT…DWHH) and 70–94 (QNCE…SKKH). Residues 109 to 136 (KLQSEDASSIASSTLSMGEPVVDSEIEE) form a disordered region. Residues 113–124 (EDASSIASSTLS) are compositionally biased toward polar residues. Serine 150 and serine 155 each carry phosphoserine. Residues 155 to 189 (SLHGRESEPSKTELATSIPQSNEASKSHLFTQEPT) are disordered. The span at 167-188 (ELATSIPQSNEASKSHLFTQEP) shows a compositional bias: polar residues. 2 C2H2-type zinc fingers span residues 208–231 (RDCL…KASH) and 259–283 (FTCL…QKGH). Acidic residues predominate over residues 317–338 (TVVEEDGSSGEGDWEDVSDDSD). Disordered stretches follow at residues 317-341 (TVVE…DNSS) and 444-463 (ANKM…ALLQ).

Belongs to the REI1 family. Associates with nascent pre-60S particles that have not yet entered the translating pool, and is released from mature 60S subunits.

It is found in the cytoplasm. Functionally, pre-60S-associated factor involved in the cytoplasmic maturation of the 60S subunit. Involved in the dissociation and recycling of other late pre-60S factors before newly synthesized large ribosomal subunits enter translation. The sequence is that of Cytoplasmic 60S subunit biogenesis factor SPCC550.15c from Schizosaccharomyces pombe (strain 972 / ATCC 24843) (Fission yeast).